The chain runs to 180 residues: Large ribosomal subunit protein uL5 (180 aa).

The protein belongs to the universal ribosomal protein uL5 family. As to quaternary structure, part of the 50S ribosomal subunit; part of the 5S rRNA/L5/L18/L25 subcomplex. Contacts the 5S rRNA and the P site tRNA. Forms a bridge to the 30S subunit in the 70S ribosome.

In terms of biological role, this is one of the proteins that bind and probably mediate the attachment of the 5S RNA into the large ribosomal subunit, where it forms part of the central protuberance. In the 70S ribosome it contacts protein S13 of the 30S subunit (bridge B1b), connecting the 2 subunits; this bridge is implicated in subunit movement. Contacts the P site tRNA; the 5S rRNA and some of its associated proteins might help stabilize positioning of ribosome-bound tRNAs. This Chlamydia trachomatis serovar L2 (strain ATCC VR-902B / DSM 19102 / 434/Bu) protein is Large ribosomal subunit protein uL5.